Here is a 239-residue protein sequence, read N- to C-terminus: Small ribosomal subunit protein uS2 (239 aa).

This sequence belongs to the universal ribosomal protein uS2 family.

This Francisella tularensis subsp. holarctica (strain FTNF002-00 / FTA) protein is Small ribosomal subunit protein uS2.